Consider the following 865-residue polypeptide: Taste receptor type 1 member 3 (865 aa).

The N-terminal stretch at 1–24 (MPGLALLGLTALLGLTALLDHGEG) is a signal peptide. Residues 25–573 (ATSCLSQQLR…FLAWGEPAVL (549 aa)) are Extracellular-facing. Residues Asn-134 and Asn-267 are each glycosylated (N-linked (GlcNAc...) asparagine). Residues 574–594 (LLLALLALALGLALAALGLFL) traverse the membrane as a helical segment. Residues 595–606 (WHSDSPLVQASG) are Cytoplasmic-facing. The chain crosses the membrane as a helical span at residues 607–627 (GPRACFGLACLGLVCLSVLLF). Residues 628–642 (PGQPGPASCLAQQPL) lie on the Extracellular side of the membrane. Residues 643-663 (FHLPLTGCLSTFFLQAAEIFV) form a helical membrane-spanning segment. Over 664-685 (GSELPPSWAEKMRGRLRGPWAW) the chain is Cytoplasmic. Residues 686 to 706 (LVVLLAMLAEAALCAWYLVAF) form a helical membrane-spanning segment. Over 707–732 (PPEVVTDWRVLPTEALVHCHVHSWIS) the chain is Extracellular. The helical transmembrane segment at 733-753 (FGLVHATNAMLAFLCFLGTFL) threads the bilayer. At 754–765 (VQSRPGRYNGAR) the chain is on the cytoplasmic side. Residues 766-786 (GLTFAMLAYFITWISFVPLFA) traverse the membrane as a helical segment. Residues 787–794 (NVHVAYQP) lie on the Extracellular side of the membrane. Residues 795-815 (AVQMGTILLCALGILATFHLP) traverse the membrane as a helical segment. Topologically, residues 816 to 865 (KCYLLLQRPELNTPEFFLEDNARAQGSSWGQGRGESGQKQVTPDPVTSPQ) are cytoplasmic. The interval 840–865 (QGSSWGQGRGESGQKQVTPDPVTSPQ) is disordered. The span at 852-865 (GQKQVTPDPVTSPQ) shows a compositional bias: polar residues.

It belongs to the G-protein coupled receptor 3 family. TAS1R subfamily. As to quaternary structure, forms homodimers or a heterodimer with TAS1R1. As to expression, expressed in taste buds.

Its subcellular location is the cell membrane. In terms of biological role, putative taste receptor. TAS1R1/TAS1R3 responds to the umami taste stimulus (the taste of monosodium glutamate). This is Taste receptor type 1 member 3 (TAS1R3) from Felis catus (Cat).